A 220-amino-acid polypeptide reads, in one-letter code: GILT-like protein CBG03282 (220 aa).

Positions 1-22 are cleaved as a signal peptide; it reads MTIIRTLFVYYSFLFILVLCSS. Asparagine 131 is a glycosylation site (N-linked (GlcNAc...) asparagine).

Belongs to the GILT family.

The protein localises to the secreted. In Caenorhabditis briggsae, this protein is GILT-like protein CBG03282.